A 788-amino-acid chain; its full sequence is Endonuclease MutS2 (788 aa).

An ATP-binding site is contributed by 334–341 (GPNTGGKT). In terms of domain architecture, Smr spans 713–788 (LDLRGQRYEE…GTGATIVYLQ (76 aa)).

The protein belongs to the DNA mismatch repair MutS family. MutS2 subfamily. In terms of assembly, homodimer. Binds to stalled ribosomes, contacting rRNA.

Its function is as follows. Endonuclease that is involved in the suppression of homologous recombination and thus may have a key role in the control of bacterial genetic diversity. In terms of biological role, acts as a ribosome collision sensor, splitting the ribosome into its 2 subunits. Detects stalled/collided 70S ribosomes which it binds and splits by an ATP-hydrolysis driven conformational change. Acts upstream of the ribosome quality control system (RQC), a ribosome-associated complex that mediates the extraction of incompletely synthesized nascent chains from stalled ribosomes and their subsequent degradation. Probably generates substrates for RQC. In Lactobacillus johnsonii (strain CNCM I-12250 / La1 / NCC 533), this protein is Endonuclease MutS2.